Reading from the N-terminus, the 394-residue chain is Phosphopentomutase (394 aa).

6 residues coordinate Mn(2+): Asp-14, Asp-287, His-292, Asp-328, His-329, and His-340.

This sequence belongs to the phosphopentomutase family. The cofactor is Mn(2+).

The protein localises to the cytoplasm. The enzyme catalyses 2-deoxy-alpha-D-ribose 1-phosphate = 2-deoxy-D-ribose 5-phosphate. The catalysed reaction is alpha-D-ribose 1-phosphate = D-ribose 5-phosphate. Its pathway is carbohydrate degradation; 2-deoxy-D-ribose 1-phosphate degradation; D-glyceraldehyde 3-phosphate and acetaldehyde from 2-deoxy-alpha-D-ribose 1-phosphate: step 1/2. Its function is as follows. Isomerase that catalyzes the conversion of deoxy-ribose 1-phosphate (dRib-1-P) and ribose 1-phosphate (Rib-1-P) to deoxy-ribose 5-phosphate (dRib-5-P) and ribose 5-phosphate (Rib-5-P), respectively. The sequence is that of Phosphopentomutase from Listeria monocytogenes serovar 1/2a (strain ATCC BAA-679 / EGD-e).